The chain runs to 146 residues: Probable gamma-secretase subunit PEN-2 (146 aa).

The disordered stretch occupies residues 1 to 26; sequence MEATRSDDPSLNPIRNRNPNPNPNPN. Residues 1–61 lie on the Lumenal side of the membrane; it reads MEATRSDDPS…SVDYARRFYK (61 aa). Residues 9 to 19 show a composition bias toward low complexity; that stretch reads PSLNPIRNRNP. The helical transmembrane segment at 62 to 82 threads the bilayer; that stretch reads FGFALLPWLWFVNCFYFWPVL. Topologically, residues 83 to 98 are cytoplasmic; that stretch reads RHSRAFPQIRNYVVRS. The chain crosses the membrane as a helical span at residues 99–119; the sequence is AIGFSVFTALLSAWALTFSIG. Residues 120–146 lie on the Lumenal side of the membrane; the sequence is GEQLFGPLYDKLVMYNVADRLGLSGLA.

Belongs to the PEN-2 family. Probable component of the gamma-secretase complex, a complex composed of a presenilin homodimer, nicastrin, APH1 and PEN2.

It localises to the membrane. In terms of biological role, probable subunit of the gamma-secretase complex, an endoprotease complex that catalyzes the intramembrane cleavage of integral membrane proteins such as Notch receptors. The protein is Probable gamma-secretase subunit PEN-2 of Arabidopsis thaliana (Mouse-ear cress).